The sequence spans 465 residues: Clusterin-like protein 1 (465 aa).

Residues 1–20 (MKPPILVFIVYLLQLRDCQC) form the signal peptide. Positions 62–107 (LMERREEEHSKLMRTLKKCREEKQEALKLMNEVQEHLEEEERLCQV) form a coiled coil. 5 disulfides stabilise this stretch: cysteine 105/cysteine 333, cysteine 116/cysteine 325, cysteine 119/cysteine 322, cysteine 124/cysteine 315, and cysteine 131/cysteine 305. N-linked (GlcNAc...) asparagine glycans are attached at residues asparagine 196 and asparagine 257. The tract at residues 280–300 (LSKQDKDSAHGGPSSTTWPVR) is disordered. Asparagine 311, asparagine 351, asparagine 412, and asparagine 430 each carry an N-linked (GlcNAc...) asparagine glycan.

The protein belongs to the clusterin family.

The protein resides in the secreted. This is Clusterin-like protein 1 from Bos taurus (Bovine).